We begin with the raw amino-acid sequence, 365 residues long: WAT1-related protein At1g01070 (365 aa).

Helical transmembrane passes span 14 to 34 (YSPV…NALV), 46 to 66 (VIGA…AYVL), 83 to 103 (FVSG…GLSY), 107 to 127 (TVSC…ALIF), 139 to 159 (AGML…FLTF), 189 to 209 (WLLG…WMLF), 221 to 241 (YSST…LSLY), 255 to 275 (FVIT…TVAT), 285 to 305 (VFAS…DFLI), and 310 to 330 (LYLG…MFLW). Residues 27–157 (MGSVNALVKK…LICISGALFL (131 aa)) enclose the EamA 1 domain. Residues 223–329 (STCLMSIFAA…VTITGLYMFL (107 aa)) form the EamA 2 domain. Positions 340–356 (TALSSGMDNEAQYTTPN) are enriched in polar residues. The interval 340-365 (TALSSGMDNEAQYTTPNKDNDSKSPV) is disordered.

This sequence belongs to the drug/metabolite transporter (DMT) superfamily. Plant drug/metabolite exporter (P-DME) (TC 2.A.7.4) family.

Its subcellular location is the membrane. This Arabidopsis thaliana (Mouse-ear cress) protein is WAT1-related protein At1g01070.